A 244-amino-acid chain; its full sequence is Phosphoadenosine 5'-phosphosulfate reductase (244 aa).

Cys-239 functions as the Nucleophile; cysteine thiosulfonate intermediate in the catalytic mechanism.

The protein belongs to the PAPS reductase family. CysH subfamily.

Its subcellular location is the cytoplasm. The catalysed reaction is [thioredoxin]-disulfide + sulfite + adenosine 3',5'-bisphosphate + 2 H(+) = [thioredoxin]-dithiol + 3'-phosphoadenylyl sulfate. Its pathway is sulfur metabolism; hydrogen sulfide biosynthesis; sulfite from sulfate: step 3/3. Catalyzes the formation of sulfite from phosphoadenosine 5'-phosphosulfate (PAPS) using thioredoxin as an electron donor. In Escherichia coli O157:H7, this protein is Phosphoadenosine 5'-phosphosulfate reductase.